The following is a 294-amino-acid chain: Large ribosomal subunit protein uL4m (294 aa).

The interval 119–139 (EVSGGGRKPWQQKGSGRARHG) is disordered. Arginine 147 carries the post-translational modification Omega-N-methylarginine.

It belongs to the universal ribosomal protein uL4 family. As to quaternary structure, component of the mitochondrial ribosome large subunit (39S) which comprises a 16S rRNA and about 50 distinct proteins. Interacts with MIEF1 upstream open reading frame protein.

The protein localises to the mitochondrion. The polypeptide is Large ribosomal subunit protein uL4m (Mrpl4) (Mus musculus (Mouse)).